Reading from the N-terminus, the 61-residue chain is Cytotoxin 2 (61 aa).

Intrachain disulfides connect C3–C22, C15–C39, C43–C54, and C55–C60.

The protein belongs to the three-finger toxin family. Short-chain subfamily. Type IB cytotoxin sub-subfamily. In terms of tissue distribution, expressed by the venom gland.

The protein localises to the secreted. This protein lyses red blood cells, has cytotoxic activity and induces hypotension, but is not neurotoxic. In addition, it induces direct paralysis of the muscle fiber. This is Cytotoxin 2 from Hemachatus haemachatus (Rinkhals).